We begin with the raw amino-acid sequence, 284 residues long: D-tagatose-1,6-bisphosphate aldolase subunit GatY (284 aa).

Aspartate 82 (proton donor) is an active-site residue. Residues histidine 83 and histidine 180 each coordinate Zn(2+). Glycine 181 serves as a coordination point for dihydroxyacetone phosphate. Histidine 208 contributes to the Zn(2+) binding site. Dihydroxyacetone phosphate is bound by residues 209 to 211 (GAS) and 230 to 233 (NVAT).

It belongs to the class II fructose-bisphosphate aldolase family. TagBP aldolase GatY subfamily. As to quaternary structure, forms a complex with GatZ. Requires Zn(2+) as cofactor.

It carries out the reaction D-tagatofuranose 1,6-bisphosphate = D-glyceraldehyde 3-phosphate + dihydroxyacetone phosphate. Its pathway is carbohydrate metabolism; D-tagatose 6-phosphate degradation; D-glyceraldehyde 3-phosphate and glycerone phosphate from D-tagatose 6-phosphate: step 2/2. Catalytic subunit of the tagatose-1,6-bisphosphate aldolase GatYZ, which catalyzes the reversible aldol condensation of dihydroxyacetone phosphate (DHAP or glycerone-phosphate) with glyceraldehyde 3-phosphate (G3P) to produce tagatose 1,6-bisphosphate (TBP). Requires GatZ subunit for full activity and stability. Is involved in the catabolism of galactitol. The sequence is that of D-tagatose-1,6-bisphosphate aldolase subunit GatY from Escherichia coli (strain 55989 / EAEC).